The chain runs to 715 residues: Coiled-coil domain-containing protein 13 (715 aa).

Coiled-coil stretches lie at residues 16–105 (KAMQ…KERD) and 134–458 (ATKI…NVHY). A disordered region spans residues 20-65 (EMQHKRLQKQMEKKREKELSLKSRADDQEEPLEVSDGLSLLHAGEP). The segment covering 28 to 45 (KQMEKKREKELSLKSRAD) has biased composition (basic and acidic residues). 3 positions are modified to phosphoserine: S258, S469, and S536. 2 disordered regions span residues 482-541 (EDPG…EQKG) and 607-645 (LEPG…DPSF). A coiled-coil region spans residues 554-608 (QAAEVERDRLTEFVTVLQKRVEESNSKLLESERKLQEERHRTVVLEQHLEKIRLE). Over residues 625-637 (GLPTSNNRHNPTG) the composition is skewed to polar residues. A coiled-coil region spans residues 653–683 (VESQMEELTTRLAIQVEENEMLKAALGSALR).

As to quaternary structure, interacts with PCM1, CEP290 and PCNT.

The protein localises to the cytoplasm. The protein resides in the cytoskeleton. Its subcellular location is the microtubule organizing center. It localises to the centrosome. It is found in the centriolar satellite. The protein localises to the cilium basal body. Required for primary cilia formation and promotes the localization of the ciliopathy protein BBS4 to both centriolar satellites and cilia. This is Coiled-coil domain-containing protein 13 from Homo sapiens (Human).